Consider the following 427-residue polypeptide: Glutamate-1-semialdehyde 2,1-aminomutase (427 aa).

Residue Lys-265 is modified to N6-(pyridoxal phosphate)lysine.

Belongs to the class-III pyridoxal-phosphate-dependent aminotransferase family. HemL subfamily. Homodimer. Pyridoxal 5'-phosphate is required as a cofactor.

Its subcellular location is the cytoplasm. The catalysed reaction is (S)-4-amino-5-oxopentanoate = 5-aminolevulinate. The protein operates within porphyrin-containing compound metabolism; protoporphyrin-IX biosynthesis; 5-aminolevulinate from L-glutamyl-tRNA(Glu): step 2/2. The polypeptide is Glutamate-1-semialdehyde 2,1-aminomutase (Pseudomonas putida (strain W619)).